Here is a 149-residue protein sequence, read N- to C-terminus: Ribonuclease H (149 aa).

An RNase H type-1 domain is found at 1-142; it reads MSTITIHTDG…ADELAREGLA (142 aa). Mg(2+) contacts are provided by D9, E47, D70, and D134. Residues 124 to 149 are disordered; it reads HAGDPGNERADELAREGLAEARGRQP. Positions 129–149 are enriched in basic and acidic residues; it reads GNERADELAREGLAEARGRQP.

Belongs to the RNase H family. Monomer. Mg(2+) serves as cofactor.

The protein resides in the cytoplasm. It carries out the reaction Endonucleolytic cleavage to 5'-phosphomonoester.. Endonuclease that specifically degrades the RNA of RNA-DNA hybrids. In Maricaulis maris (strain MCS10) (Caulobacter maris), this protein is Ribonuclease H.